The chain runs to 77 residues: Probable Fe(2+)-trafficking protein (77 aa).

Belongs to the Fe(2+)-trafficking protein family. As to quaternary structure, monomer.

Its function is as follows. Could be a mediator in iron transactions between iron acquisition and iron-requiring processes, such as synthesis and/or repair of Fe-S clusters in biosynthetic enzymes. This chain is Probable Fe(2+)-trafficking protein, found in Buchnera aphidicola subsp. Acyrthosiphon pisum (strain APS) (Acyrthosiphon pisum symbiotic bacterium).